Reading from the N-terminus, the 862-residue chain is Phosphofurin acidic cluster sorting protein 2 (862 aa).

3 disordered regions span residues 151–215 (HEDS…TTSM), 263–436 (LDVE…TRSQ), and 658–713 (SSAT…SQGV). Positions 263-272 (LDVENPSDSG) are enriched in low complexity. Residues 313-328 (SHREPPSPADVPEKTR) show a composition bias toward basic and acidic residues. The span at 332–344 (GKQQLSDSVSDTV) shows a compositional bias: polar residues. Phosphoserine is present on residues Ser361, Ser387, Ser424, Ser662, and Ser665. 2 stretches are compositionally biased toward low complexity: residues 658–693 (SSAT…KEAS) and 700–710 (PSVSGGLSSPS).

Belongs to the PACS family. As to quaternary structure, interacts with BID and PKD2. Interacts with SIRT1. Interacts with HDAC1. Interacts with TRPV1. Interacts with WDR37.

It localises to the endoplasmic reticulum. Its subcellular location is the mitochondrion. Multifunctional sorting protein that controls the endoplasmic reticulum (ER)-mitochondria communication, including the apposition of mitochondria with the ER and ER homeostasis. In addition, in response to apoptotic inducer, translocates BIB to mitochondria, which initiates a sequence of events including the formation of mitochondrial truncated BID, the release of cytochrome c, the activation of caspase-3 thereby causing cell death. May also involved in ion channel trafficking, directing acidic cluster-containing ion channels to distinct subcellular compartments. This chain is Phosphofurin acidic cluster sorting protein 2 (Pacs2), found in Mus musculus (Mouse).